The following is a 196-amino-acid chain: MSFAEKLTGLMARPNQQDPAGGPEQPWYLKYGSRVLGIVAAFFAILFGLWNVLSIIGLSVSCLVAGIIQMLAGFVVMALEAPCCFICIEKVGSVADMMDTKPLYFRAGLYCAMAVPPIFMCFGLASLFGSGLIFATGAVYGMMALGKKASAAEMRAAAQQASYGGNAAPTTNDRAGIVNNAQPFSFTGAVGTDSNV.

3 helical membrane passes run 36-56, 67-89, and 114-134; these read LGIVAAFFAILFGLWNVLSII, IIQMLAGFVVMALEAPCCFICIE, and AVPPIFMCFGLASLFGSGLIF.

This sequence belongs to the calcium channel flower family. Homomultimer. Associates with the dally/ magu complex.

It is found in the cell membrane. The protein localises to the cytoplasmic vesicle. Its subcellular location is the secretory vesicle. The protein resides in the synaptic vesicle membrane. It localises to the presynaptic cell membrane. It is found in the endosome. With respect to regulation, channel activity is inhibited by La(3+), which reduces Ca(2+) influx and thus inhibits it's function in promoting activity-dependent bulk endocytosis (ADBE) in response to high stimuli. Its function is as follows. Transmembrane protein which mediates synaptic endocytosis, fitness-based cell culling, neuronal culling, morphogen gradient scaling, and calcium transport. Regulates synaptic endocytosis and hence couples exo- with endocytosis. Controls two major modes of synaptic vesicle (SV) endocytosis in the synaptic boutons of neuromuscular junctions (NMJs); Ca(2+) channel-independent Clathrin-mediated endocytosis (CME) in response to mild stimulation, and Ca(2+) channel-dependent activity-dependent bulk endocytosis (ADBE) in response to strong stimulation. Functions in ADBE and subsequent SV reformation from bulk endosomes by initiating Ca(2+) channel-dependent phosphatidylinositol 4,5-bisphosphate (PtdIns(4,5)P2) compartmentalization in synaptic boutons. There it acts at the periactive zone to provide the low Ca(2+) levels required to initiate Calcineurin activation and upregulate PtdIns(4,5)P2. Conversely PtdIns(4,5)P2 enhances fwe Ca(2+) channel-activity, establishing a positive feedback loop that induces PtdIns(4,5)P2 microdomain at the periactive zone. These microdomains trigger bulk membrane invagination (i.e. ADBE) by triggering actin polymerization while also promoting localization of fwe to bulk endosomes, thereby removing the ADBE trigger to reduce endocytosis and prevent excess membrane uptake. PtdIns(4,5)P2 then promotes SV reformation from the bulk endosomes, to coordinate ADBE and subsequent SV reformation. Different combinations of the flower isoforms at the cell membrane are also required for the identification and elimination of suboptimal or supernumerary cells during development, regeneration, and adulthood. Required for the recognition and elimination of unfit cells in the developing wing during cell competition. In the developing pupal retina, mediates the elimination of unwanted postmitotic neurons, including supernumerary photoreceptor neurons that form at the periphery of the retina and are contained within incomplete ommatidia units. Also required for efficient elimination and replacement of old neurons by newly generated neurons during regeneration in the adult brain following mechanical injury. Downstream of the flower fitness fingerprints, cells identified as unwanted or unfit are eliminated via apoptosis through the expression of ahuizotl (azot). However, the cells marked for elimination by the flower isoforms only undergo apoptosis if additional thresholds are met; (1) their neighboring fit/healthy cells express different levels of the fwe isoforms, and (2) the levels of the protective signal SPARC expressed by the loser or unwanted cells are unable to inhibit caspase activation. These additional thresholds for flower-mediated apoptosis, allows useful cells to recover from transient and limited stress before they are unnecessarily eliminated. Functions with dally and magu in a mechanism of scaling, which utilises apoptosis to ensure that the dpp morphogen gradient, which mediates organ growth, remains proportional to the size of the growing wing. In this mechanism, fwe represses dally- and Magu-dependent activity in expanding the gradient, and dally/Magu inhibits fwe-dependent apoptosis to keep cell death rate low. When the levels of these different proteins are optimally regulated the gradient correctly scales with organ growth but when this fails, fwe-mediated apoptosis is activated to trim the developing tissue to match the correct size of the gradient. The chain is Calcium channel flower from Drosophila virilis (Fruit fly).